Here is a 485-residue protein sequence, read N- to C-terminus: Taxane 13-alpha-hydroxylase (485 aa).

Cysteine 431 contacts heme.

Belongs to the cytochrome P450 family. Heme serves as cofactor.

It carries out the reaction taxa-4(20),11-dien-5alpha-ol + reduced [NADPH--hemoprotein reductase] + O2 = taxa-4(20),11-dien-5alpha,13alpha-diol + oxidized [NADPH--hemoprotein reductase] + H2O + H(+). It functions in the pathway alkaloid biosynthesis; taxol biosynthesis. Its function is as follows. Involved in the transformation of a taxadienyl acetate by hydroxylation at C13 to yield taxadien-5-alpha-acetoxy-13-alpha-ol. This is Taxane 13-alpha-hydroxylase (CYP725A2) from Taxus cuspidata (Japanese yew).